Reading from the N-terminus, the 95-residue chain is Small ribosomal subunit protein bS20 (95 aa).

Belongs to the bacterial ribosomal protein bS20 family.

Its function is as follows. Binds directly to 16S ribosomal RNA. In Ehrlichia ruminantium (strain Gardel), this protein is Small ribosomal subunit protein bS20.